The following is a 337-amino-acid chain: uncharacterized protein (337 aa).

A run of 2 helical transmembrane segments spans residues 241–261 and 273–293; these read FTLL…GAFI and ASLI…IGII.

Belongs to the glycosyltransferase 2 family.

Its subcellular location is the cell membrane. This is an uncharacterized protein from Bacillus subtilis (strain 168).